A 721-amino-acid polypeptide reads, in one-letter code: Long-chain-fatty-acid--CoA ligase ACSBG1 (721 aa).

The interval 1-64 (MPRSSEAGYC…SHGLELSAPE (64 aa)) is disordered. Polar residues predominate over residues 26–43 (QQGASMGTSPDNSQTSSL). 4 positions are modified to phosphoserine: S34, S50, S53, and S70. Residues 279-287 (TSGTTGNPK), 469-474 (AGYGLS), D547, and R562 contribute to the ATP site. Y655 is subject to Phosphotyrosine. K698 contacts ATP.

Belongs to the ATP-dependent AMP-binding enzyme family. Bubblegum subfamily. In terms of tissue distribution, present in testis, at a lower level in brain, and at a very low level in ovary. Not detected in other tissues. tested. Present in Leydig cells of the adult testis and to a lesser degree in the seminiferous tubules in spermatogonia and Sertoli cells (at protein level).

It is found in the cytoplasm. The protein localises to the cytoplasmic vesicle. It localises to the microsome. Its subcellular location is the endoplasmic reticulum. The protein resides in the cell membrane. It catalyses the reaction a long-chain fatty acid + ATP + CoA = a long-chain fatty acyl-CoA + AMP + diphosphate. The catalysed reaction is (E)-hexadec-2-enoate + ATP + CoA = (2E)-hexadecenoyl-CoA + AMP + diphosphate. The enzyme catalyses hexadecanoate + ATP + CoA = hexadecanoyl-CoA + AMP + diphosphate. Its function is as follows. Catalyzes the conversion of fatty acids such as long-chain and very long-chain fatty acids to their active form acyl-CoAs for both synthesis of cellular lipids, and degradation via beta-oxidation. Can activate diverse saturated, monosaturated and polyunsaturated fatty acids. The polypeptide is Long-chain-fatty-acid--CoA ligase ACSBG1 (Rattus norvegicus (Rat)).